The chain runs to 355 residues: DNA polymerase IV (355 aa).

The region spanning 7–188 is the UmuC domain; sequence IIHIDMDCFY…LPVRKLFGVG (182 aa). Positions 11 and 106 each coordinate Mg(2+). E107 is a catalytic residue.

This sequence belongs to the DNA polymerase type-Y family. Monomer. Requires Mg(2+) as cofactor.

It is found in the cytoplasm. The catalysed reaction is DNA(n) + a 2'-deoxyribonucleoside 5'-triphosphate = DNA(n+1) + diphosphate. Functionally, poorly processive, error-prone DNA polymerase involved in untargeted mutagenesis. Copies undamaged DNA at stalled replication forks, which arise in vivo from mismatched or misaligned primer ends. These misaligned primers can be extended by PolIV. Exhibits no 3'-5' exonuclease (proofreading) activity. May be involved in translesional synthesis, in conjunction with the beta clamp from PolIII. The sequence is that of DNA polymerase IV from Legionella pneumophila (strain Paris).